The following is a 461-amino-acid chain: BSD domain-containing protein 1 (461 aa).

A phosphoserine mark is found at S123 and S197. The 53-residue stretch at 177–229 (WLSQFCLEEKKGEISELLVGSPSIRALYTKMVPAAVSHSEFWHRYFYKVHQLE) folds into the BSD domain. Residues 239 to 384 (KQRAEQSISE…SGPEPRPPAR (146 aa)) form a disordered region. Residues 250-259 (PGWEEEEEEL) are compositionally biased toward acidic residues. The segment covering 295-318 (LVTPVEPPTEVTPSESSESVSLVT) has biased composition (low complexity). T387 is subject to Phosphothreonine. The tract at residues 398–430 (VFELNSDSGKSTPSNNGKKGSSTDISEDWEKDF) is disordered. Residues 402–421 (NSDSGKSTPSNNGKKGSSTD) are compositionally biased toward polar residues. Residues S418, S419, and S449 each carry the phosphoserine modification.

The chain is BSD domain-containing protein 1 (BSDC1) from Bos taurus (Bovine).